The sequence spans 452 residues: UDP-N-acetylmuramoylalanine--D-glutamate ligase (452 aa).

119–125 (GSNGKTT) serves as a coordination point for ATP.

This sequence belongs to the MurCDEF family.

Its subcellular location is the cytoplasm. The enzyme catalyses UDP-N-acetyl-alpha-D-muramoyl-L-alanine + D-glutamate + ATP = UDP-N-acetyl-alpha-D-muramoyl-L-alanyl-D-glutamate + ADP + phosphate + H(+). Its pathway is cell wall biogenesis; peptidoglycan biosynthesis. Functionally, cell wall formation. Catalyzes the addition of glutamate to the nucleotide precursor UDP-N-acetylmuramoyl-L-alanine (UMA). This is UDP-N-acetylmuramoylalanine--D-glutamate ligase from Streptococcus pyogenes serotype M28 (strain MGAS6180).